The sequence spans 327 residues: D-threonate 4-phosphate dehydrogenase (327 aa).

Substrate-binding residues include His-139 and Thr-140. 3 residues coordinate a divalent metal cation: His-169, His-213, and His-268. Substrate is bound by residues Lys-276, Asn-285, and Arg-294.

Belongs to the PdxA family. PdxA2 subfamily. In terms of assembly, homodimer. A divalent metal cation serves as cofactor.

The enzyme catalyses 4-O-phospho-D-threonate + NAD(+) = dihydroxyacetone phosphate + CO2 + NADH. Functionally, catalyzes the NAD-dependent oxidation and subsequent decarboxylation of D-threonate 4-phosphate to produce dihydroxyacetone phosphate (DHAP). Can also use 4-hydroxy-L-threonine 4-phosphate as substrate. The chain is D-threonate 4-phosphate dehydrogenase from Salmonella typhimurium (strain LT2 / SGSC1412 / ATCC 700720).